The chain runs to 285 residues: Tropomyosin alpha-3 chain (285 aa).

Residues 1–285 are a coiled coil; it reads MMEAIKKKMQ…DHALNDMTSI (285 aa). Residue methionine 2 is modified to N-acetylmethionine. Residue methionine 2 is modified to N-acetylalanine. Threonine 54 is subject to Phosphothreonine. A phosphoserine mark is found at serine 62 and serine 88. A Phosphothreonine modification is found at threonine 109. Residues serine 207 and serine 216 each carry the phosphoserine modification. At isoleucine 228 the chain carries N6-acetyllysine. Position 253 is a phosphothreonine (threonine 253). Tyrosine 262 is modified (phosphotyrosine). At serine 272 the chain carries Phosphoserine. Threonine 283 carries the post-translational modification Phosphothreonine. Serine 284 is subject to Phosphoserine.

It belongs to the tropomyosin family. In terms of assembly, homodimer. Heterodimer of an alpha (TPM1, TPM3 or TPM4) and a beta (TPM2) chain. Interacts with TMOD1. Interacts with TNNT1.

Its subcellular location is the cytoplasm. It localises to the cytoskeleton. In terms of biological role, binds to actin filaments in muscle and non-muscle cells. Plays a central role, in association with the troponin complex, in the calcium dependent regulation of vertebrate striated muscle contraction. Smooth muscle contraction is regulated by interaction with caldesmon. In non-muscle cells is implicated in stabilizing cytoskeleton actin filaments. The sequence is that of Tropomyosin alpha-3 chain (Tpm3) from Mus musculus (Mouse).